A 99-amino-acid polypeptide reads, in one-letter code: Protein dpy-30 homolog (99 aa).

An N-acetylmethionine modification is found at methionine 1. A disordered region spans residues 1–26 (MEPEQMLEGQTQVAENPHSEYGLTDN). At serine 19 the chain carries Phosphoserine. Position 35 is an N6-acetyllysine; alternate (lysine 35). Residue lysine 35 forms a Glycyl lysine isopeptide (Lys-Gly) (interchain with G-Cter in SUMO2); alternate linkage.

Belongs to the dpy-30 family. Homodimer. Core component of several methyltransferase-containing complexes including MLL1/MLL, MLL2/3 (also named ASCOM complex) and MLL4/WBP7. Each complex is at least composed of ASH2L, RBBP5, WDR5, DPY30, one or more specific histone methyltransferases (KMT2A/MLL1, KMT2D/MLL2, KMT2C/MLL3 and KMT2B/MLL4), and the facultative components MEN1, HCFC1, HCFC2, NCOA6, KDM6A, PAXIP1/PTIP, PAGR1 and alpha- and beta-tubulin. Interacts with ASH2L; the interaction is direct. Interacts with ARFGEF1. Component of the SET1 complex, at least composed of the catalytic subunit (SETD1A or SETD1B), WDR5, WDR82, RBBP5, ASH2L/ASH2, CXXC1/CFP1, HCFC1 and DPY30.

It localises to the nucleus. The protein resides in the golgi apparatus. Its subcellular location is the trans-Golgi network. Its function is as follows. As part of the MLL1/MLL complex, involved in the methylation of histone H3 at 'Lys-4', particularly trimethylation. Histone H3 'Lys-4' methylation represents a specific tag for epigenetic transcriptional activation. May play some role in histone H3 acetylation. In embryonic stem cells, may play a crucial role in retinoic acid-induced differentiation along the neural lineage, regulating gene induction and H3 'Lys-4' methylation at key developmental loci. May also play an indirect or direct role in endosomal transport. The polypeptide is Protein dpy-30 homolog (DPY30) (Bos taurus (Bovine)).